The following is a 500-amino-acid chain: Cytochrome P450 monooxygenase ausI (500 aa).

The chain crosses the membrane as a helical span at residues 8-28 (LALLGQPLVPGLMVVSAILYL). A heme-binding site is contributed by Cys440.

The protein belongs to the cytochrome P450 family. Requires heme as cofactor.

It is found in the membrane. It participates in secondary metabolite biosynthesis; terpenoid biosynthesis. Functionally, cytochrome P450 monooxygenase; part of the gene cluster B that mediates the biosynthesis of the fungal meroterpenoid acetoxydehydroaustin. The first step of the pathway is the synthesis of 3,5-dimethylorsellinic acid by the polyketide synthase ausA. 3,5-dimethylorsellinic acid is then prenylated by the polyprenyl transferase ausN. Further epoxidation by the FAD-dependent monooxygenase ausM and cyclization by the probable terpene cyclase ausL lead to the formation of protoaustinoid A. Protoaustinoid A is then oxidized to spiro-lactone preaustinoid A3 by the combined action of the FAD-binding monooxygenases ausB and ausC, and the dioxygenase ausE. Acid-catalyzed keto-rearrangement and ring contraction of the tetraketide portion of preaustinoid A3 by ausJ lead to the formation of preaustinoid A4. The aldo-keto reductase ausK, with the help of ausH, is involved in the next step by transforming preaustinoid A4 into isoaustinone which is in turn hydroxylated by the P450 monooxygenase ausI to form austinolide. The cytochrome P450 monooxygenase ausG then modifies austinolide to austinol. Austinol is further acetylated to austin by the O-acetyltransferase ausP, which spontaneously changes to dehydroaustin. The cytochrome P450 monooxygenase then converts dehydroaustin is into 7-dehydrodehydroaustin. The hydroxylation catalyzed by ausR permits the second O-acetyltransferase ausQ to add an additional acetyl group to the molecule, leading to the formation of acetoxydehydroaustin. Due to genetic rearrangements of the clusters and the subsequent loss of some enzymes, the end product of the Penicillium brasilianum austinoid biosynthesis clusters is acetoxydehydroaustin. The polypeptide is Cytochrome P450 monooxygenase ausI (Penicillium brasilianum).